Reading from the N-terminus, the 407-residue chain is uncharacterized protein (407 aa).

Helical transmembrane passes span 22 to 42, 51 to 71, 101 to 121, 126 to 146, 154 to 174, 179 to 199, 227 to 247, 258 to 278, 286 to 306, 309 to 329, 347 to 367, and 369 to 389; these read IVSV…PLAV, LGFS…ATLA, ALLL…VLLV, VLGI…IGRV, VISW…PVGV, ALIP…GYYL, GLGL…ITLY, LSLT…ANTI, VAIV…LAPV, VALV…PALG, AYSV…GYVA, and AFGY…GVAL.

The protein belongs to the major facilitator superfamily. YhhS family.

The protein localises to the cell inner membrane. This is an uncharacterized protein from Burkholderia pseudomallei (strain 1106a).